Consider the following 439-residue polypeptide: Xylose isomerase (439 aa).

Catalysis depends on residues histidine 98 and aspartate 101. Mg(2+) is bound by residues glutamate 229, glutamate 265, histidine 268, aspartate 293, aspartate 304, aspartate 306, and aspartate 335.

It belongs to the xylose isomerase family. Homotetramer. Mg(2+) serves as cofactor.

The protein resides in the cytoplasm. It carries out the reaction alpha-D-xylose = alpha-D-xylulofuranose. In terms of biological role, involved in D-xylose catabolism. In Staphylococcus xylosus, this protein is Xylose isomerase (xylA).